Here is a 362-residue protein sequence, read N- to C-terminus: Phospho-N-acetylmuramoyl-pentapeptide-transferase (362 aa).

The next 10 helical transmembrane spans lie at 28 to 48, 72 to 92, 100 to 120, 134 to 154, 170 to 190, 201 to 221, 241 to 261, 265 to 285, 290 to 310, and 339 to 359; these read AACMTALIVSFLLGPALIRWL, GTPTMGGVLILAATGISTLLW, VWAVLLLTLGYGGIGFADDYL, VKLIGQAVIGLIAAIWIMSLT, VLIPLGFAFPLFGMLVAMGAS, GLAIVPTIIAAGVFALIAYLV, LTVFCSALIGAGLGFLWFNAP, VFMGDTGSLALGGALGGVAIA, IVLAIVGGLFVVETISVIVQV, and TIVIRFWIVSFILALAGLATL.

Belongs to the glycosyltransferase 4 family. MraY subfamily. Mg(2+) serves as cofactor.

It is found in the cell inner membrane. The catalysed reaction is UDP-N-acetyl-alpha-D-muramoyl-L-alanyl-gamma-D-glutamyl-meso-2,6-diaminopimeloyl-D-alanyl-D-alanine + di-trans,octa-cis-undecaprenyl phosphate = di-trans,octa-cis-undecaprenyl diphospho-N-acetyl-alpha-D-muramoyl-L-alanyl-D-glutamyl-meso-2,6-diaminopimeloyl-D-alanyl-D-alanine + UMP. Its pathway is cell wall biogenesis; peptidoglycan biosynthesis. Functionally, catalyzes the initial step of the lipid cycle reactions in the biosynthesis of the cell wall peptidoglycan: transfers peptidoglycan precursor phospho-MurNAc-pentapeptide from UDP-MurNAc-pentapeptide onto the lipid carrier undecaprenyl phosphate, yielding undecaprenyl-pyrophosphoryl-MurNAc-pentapeptide, known as lipid I. The polypeptide is Phospho-N-acetylmuramoyl-pentapeptide-transferase (Granulibacter bethesdensis (strain ATCC BAA-1260 / CGDNIH1)).